A 445-amino-acid polypeptide reads, in one-letter code: Nuclear envelope integral membrane protein 1 (445 aa).

The N-terminal stretch at 1–44 (MAGGMKVAVLPAVGAGPWSWGAGGCGAVRLLLVLFGCFVCGSAG) is a signal peptide. The N-linked (GlcNAc...) asparagine glycan is linked to Asn-125. The next 5 helical transmembrane spans lie at 161–181 (PKLF…DLLS), 186–206 (FYYS…IIFI), 216–236 (PIYI…QLVF), 245–265 (CYWQ…FAVC), and 289–309 (LCFM…VVIA). An a; required for its colocalization with lamins at the nuclear envelope region spans residues 186-297 (FYYSTGMSVG…GLCFMYSSIQ (112 aa)). A b; required for interaction with RAN-GTP region spans residues 336–405 (TVPPRLLTEE…LTPNEVSVHE (70 aa)). Residues 336–445 (TVPPRLLTEE…LVVQQNSFLT (110 aa)) form a required for nuclear localization region. Phosphoserine occurs at positions 368, 424, and 425. Over residues 418–430 (ELSEETSSEEEDS) the composition is skewed to acidic residues. Residues 418–445 (ELSEETSSEEEDSDSRYPLVVQQNSFLT) are disordered.

This sequence belongs to the NEMP family. As to quaternary structure, homooligomer. Interacts with RAN-GTP. Interacts with EMD. Post-translationally, phosphorylation may regulate its interaction with RAN-GTP.

It is found in the nucleus inner membrane. The protein resides in the nucleus envelope. In terms of biological role, together with EMD, contributes to nuclear envelope stiffness in germ cells. Required for female fertility. Essential for normal erythropoiesis. Required for efficient nuclear envelope opening and enucleation during the late stages of erythroblast maturation. The sequence is that of Nuclear envelope integral membrane protein 1 (NEMP1) from Bos taurus (Bovine).